The primary structure comprises 39 residues: Potassium channel toxin alpha-KTx 2.17 (39 aa).

3 cysteine pairs are disulfide-bonded: cysteine 7-cysteine 29, cysteine 13-cysteine 34, and cysteine 17-cysteine 36. Isoleucine amide is present on isoleucine 39.

Belongs to the short scorpion toxin superfamily. Potassium channel inhibitor family. Alpha-KTx 02 subfamily. In terms of tissue distribution, expressed by the venom gland.

It is found in the secreted. Blocks human voltage-gated potassium channels Kv1.1/KCNA1 (IC(50)=4.8 nM) and Kv1.2/KCNA2 (IC(50)=2.9 nM). This Centruroides tecomanus (Scorpion) protein is Potassium channel toxin alpha-KTx 2.17.